The chain runs to 248 residues: Sperm-specific protein Don juan (248 aa).

The stretch at 82–147 forms a coiled coil; sequence KEGNQDELEN…EKKTKCAKKD (66 aa). The segment at 146–200 is disordered; that stretch reads KDPCKKKDPCKKKDPCKKKDPCKKKDPCKKKDPCKKKDPCKKKDPCKKKGGDLKK. A run of 8 repeats spans residues 147-152, 153-158, 159-164, 165-170, 171-176, 177-182, 183-188, and 189-194. The 8 X 6 AA tandem repeat of D-P-C-K-K-K stretch occupies residues 147-194; it reads DPCKKKDPCKKKDPCKKKDPCKKKDPCKKKDPCKKKDPCKKKDPCKKK. The stretch at 197–244 forms a coiled coil; sequence DLKKKCKKLAEKEKCKKLAKKEKMKKLQKKCKKMAQKEKCKKMAKKDK.

Expression limited to post-meiotic male germ cells. Expressed in elongated spermatids during individualization and in finally elongated nuclei of spermatids. After completion of nuclear shaping it is no longer expressed in the sperm heads with the onset of individualization.

Its subcellular location is the nucleus. The protein resides in the mitochondrion. In terms of biological role, may be involved in the final steps of mitochondrial differentiation within the flagellum. This is Sperm-specific protein Don juan (dj) from Drosophila melanogaster (Fruit fly).